Here is a 264-residue protein sequence, read N- to C-terminus: S-adenosylmethionine decarboxylase proenzyme (264 aa).

Ser-113 acts as the Schiff-base intermediate with substrate; via pyruvic acid in catalysis. Residue Ser-113 is modified to Pyruvic acid (Ser); by autocatalysis. The active-site Proton acceptor; for processing activity is His-118. Residue Cys-141 is the Proton donor; for catalytic activity of the active site.

Belongs to the prokaryotic AdoMetDC family. Type 2 subfamily. As to quaternary structure, heterooctamer of four alpha and four beta chains arranged as a tetramer of alpha/beta heterodimers. Pyruvate is required as a cofactor. In terms of processing, is synthesized initially as an inactive proenzyme. Formation of the active enzyme involves a self-maturation process in which the active site pyruvoyl group is generated from an internal serine residue via an autocatalytic post-translational modification. Two non-identical subunits are generated from the proenzyme in this reaction, and the pyruvate is formed at the N-terminus of the alpha chain, which is derived from the carboxyl end of the proenzyme. The post-translation cleavage follows an unusual pathway, termed non-hydrolytic serinolysis, in which the side chain hydroxyl group of the serine supplies its oxygen atom to form the C-terminus of the beta chain, while the remainder of the serine residue undergoes an oxidative deamination to produce ammonia and the pyruvoyl group blocking the N-terminus of the alpha chain.

The enzyme catalyses S-adenosyl-L-methionine + H(+) = S-adenosyl 3-(methylsulfanyl)propylamine + CO2. Its pathway is amine and polyamine biosynthesis; S-adenosylmethioninamine biosynthesis; S-adenosylmethioninamine from S-adenosyl-L-methionine: step 1/1. Functionally, catalyzes the decarboxylation of S-adenosylmethionine to S-adenosylmethioninamine (dcAdoMet), the propylamine donor required for the synthesis of the polyamines spermine and spermidine from the diamine putrescine. This Pseudomonas syringae pv. tomato (strain ATCC BAA-871 / DC3000) protein is S-adenosylmethionine decarboxylase proenzyme.